A 176-amino-acid chain; its full sequence is Odorant-binding protein 2a (176 aa).

The signal sequence occupies residues 1 to 19 (MKSLLLTILLLGLVAVLKA). N42 and N124 each carry an N-linked (GlcNAc...) asparagine glycan. C79 and C172 are oxidised to a cystine.

This sequence belongs to the calycin superfamily. Lipocalin family. As to expression, expressed in the liver (at protein level). Expressed in epididymis.

The protein localises to the secreted. In terms of biological role, involved in the regulation of systematic glucose homeostasis and insulin sensitivity. Involved in the regulation of liver lipid levels by positive regulation of hepatic lipogenesis and negative regulation of fatty acid beta-oxidation; via downstream transcriptional regulation of CPT1A and hepatic lipogenic program gene expression. May regulate hepatic lipogenesis and fatty acid beta-oxidation in an autocrine or paracrine manner. The sequence is that of Odorant-binding protein 2a (Obp2a) from Mus musculus (Mouse).